Reading from the N-terminus, the 470-residue chain is Cell division protein FtsA (470 aa).

Residues 416–470 (NKKDTHENEVESTDEEIYQSEDNHQEHKQNHEHVQDKDKDKEESKFKKLMKSLFE) are disordered. A compositionally biased stretch (acidic residues) spans 425 to 434 (VESTDEEIYQ). The segment covering 436–461 (EDNHQEHKQNHEHVQDKDKDKEESKF) has biased composition (basic and acidic residues).

This sequence belongs to the FtsA/MreB family. Self-interacts. Interacts with FtsZ.

Its subcellular location is the cell membrane. In terms of biological role, cell division protein that is involved in the assembly of the Z ring. May serve as a membrane anchor for the Z ring. The protein is Cell division protein FtsA of Staphylococcus aureus (strain MSSA476).